The following is a 234-amino-acid chain: uncharacterized protein (234 aa).

4 LRR repeats span residues leucine 44–leucine 63, lysine 64–proline 84, asparagine 85–glutamine 107, and leucine 111–leucine 134. Residues glutamate 161 to lysine 234 are disordered. Acidic residues predominate over residues leucine 163–glutamate 226.

This sequence belongs to the ANP32 family. As to expression, expressed in activated stem cells, such as mobilized CD34+ cells and cord blood CD34+ cells, but not in resting bone marrow CD34+ cells. Expressed in a variety of neoplastic cell lines, mainly in prostatic adenocarcinoma cell lines. Not expressed in normal prostatic tissue.

This is an uncharacterized protein from Homo sapiens (Human).